A 134-amino-acid polypeptide reads, in one-letter code: RuBisCO chaperone RbcX (134 aa).

Positions 97-134 (SNGNHRRSLLERLTQVDSSSTDQTEPNPGESDTSEDSE) are disordered. Over residues 111-122 (QVDSSSTDQTEP) the composition is skewed to polar residues.

Belongs to the RbcX family. Homodimer (RbcX2). Interacts with the exposed C-terminal peptide of RbcL ('Glu-459-Asp-468'); binds 2 RbcL peptides per RbcX2, stapling them into an RbcL2 dimer. A slightly longer peptide binds with a higher affinity, but no long-term stable interaction with RbcL is detected. Contacts a second RbcL monomer via its peripheral polar surface.

The protein resides in the carboxysome. It is found in the cytoplasm. Functionally, an RbcL-specific chaperone. Required for assembly of the RbcL8 core, acting downstream of the major chaperonin (GroEL-GroES). Acts on newly folded RbcL, has a transient dynamic interaction with RbcL and is eventually displaced by RbcS. The central cleft of the RbcX homodimer (RbcX2) binds the C-terminus of an RbcL monomer, stabilizing the C-terminus and probably preventing its reassociation with chaperonin GroEL-ES. At the same time the peripheral region of RbcX2 binds a second RbcL monomer, bridging the RbcL homodimers in the correct orientation. The RbcX2(2)-bound RbcL dimers then assemble into the RbcL8 core (RbcL8-(RbcX2)8). RbcS binding triggers the release of RbcX2. Required for optimal reconstitution of RuBisCO into its RbcL8S8 holoenzyme form upon expression of rbcL-rbcS subunits in E.coli, and probably also in situ. A frameshift mutation that replaces half the protein reduces accumulation of both RbcL and RbcS subunits and halves activity of RuBisCO in situ and in E.coli. In Picosynechococcus sp. (strain ATCC 27264 / PCC 7002 / PR-6) (Agmenellum quadruplicatum), this protein is RuBisCO chaperone RbcX.